Reading from the N-terminus, the 471-residue chain is Phosphatidylserine synthase 2 (471 aa).

The disordered stretch occupies residues 1 to 26 (MRRGERRVAGGSGSESPLLEGRRSTE). At 1 to 40 (MRRGERRVAGGSGSESPLLEGRRSTESEVYDDGTNTFFWR) the chain is on the cytoplasmic side. Residues Ser-12, Ser-14, and Ser-16 each carry the phosphoserine modification. A helical transmembrane segment spans residues 41–61 (AHTLTVLFILTCALGYVTLLE). At 62–74 (ETPQDTAYNTKRG) the chain is on the lumenal side. The chain crosses the membrane as a helical span at residues 75–95 (IVASILVFLCFGVTQAKDGPF). The Cytoplasmic portion of the chain corresponds to 96 to 104 (SRPHPAYWR). The helical transmembrane segment at 105–125 (FWLCVSVVYELFLIFILFQTV) threads the bilayer. At 126-291 (HDGRQFLKYV…EWKPASSLHR (166 aa)) the chain is on the lumenal side. N-linked (GlcNAc...) asparagine glycosylation is present at Asn-159. Residues 292–312 (WLAVCGIILVFLLAELNTFYL) form a helical membrane-spanning segment. Residue Lys-313 is a topological domain, cytoplasmic. The helical transmembrane segment at 314 to 334 (FVLWMPPEHYLVLLRLVFFVN) threads the bilayer. Over 335 to 354 (VGGVAMREIYDFMDELKPHR) the chain is Lumenal. A helical membrane pass occupies residues 355-375 (KLGQQAWLVAAITVTELLIVV). Over 376-381 (KYDPHT) the chain is Cytoplasmic. Residues 382-402 (LTLSLPFYISQCWTLGSILVL) form a helical membrane-spanning segment. The Lumenal segment spans residues 403–471 (TWTVWRFFLR…PAEEGPSAAS (69 aa)). The interval 423–471 (RQKQQSHQAINNGDGHPGPEDDLPGTGTAEEEGTTNDGVPAEEGPSAAS) is disordered.

It belongs to the phosphatidyl serine synthase family.

The protein localises to the endoplasmic reticulum membrane. It catalyses the reaction a 1,2-diacyl-sn-glycero-3-phosphoethanolamine + L-serine = a 1,2-diacyl-sn-glycero-3-phospho-L-serine + ethanolamine. It carries out the reaction 1-hexadecanoyl-2-(9Z-octadecenoyl)-sn-glycero-3-phosphoethanolamine + L-serine = 1-hexadecanoyl-2-(9Z-octadecenoyl)-sn-glycero-3-phospho-L-serine + ethanolamine. The enzyme catalyses 1-hexadecanoyl-2-(4Z,7Z,10Z,13Z,16Z,19Z-docosahexaenoyl)-sn-glycero-3-phosphoethanolamine + L-serine = 1-hexadecanoyl-2-(4Z,7Z,10Z,13Z,16Z,19Z-docosahexaenoyl)-sn-glycero-3-phosphoserine + ethanolamine. The catalysed reaction is 1-octadecanoyl-2-(5Z,8Z,11Z,14Z)-eicosatetraenoyl-sn-glycero-3-phosphoethanolamine + L-serine = 1-octadecanoyl-2-(5Z,8Z,11Z,14Z)-eicosatetraenoyl-sn-glycero-3-phosphoserine + ethanolamine. It catalyses the reaction 1-octadecanoyl-2-(4Z,7Z,10Z,13Z,16Z,19Z-docosahexaenoyl)-sn-glycero-3-phosphoethanolamine + L-serine = 1-octadecanoyl-2-(4Z,7Z,10Z,13Z,16Z,19Z-docosahexaenoyl)-sn-glycero-3-phosphoserine + ethanolamine. It carries out the reaction 1-(1Z-octadecenyl)-2-(4Z,7Z,10Z,13Z,16Z,19Z-docosahexaenoyl)-sn-glycero-3-phosphoethanolamine + L-serine = 1-(1Z-octadecenyl)-2-(4Z,7Z,10Z,13Z,16Z,19Z-docosahexaenoyl)-sn-glycero-3-phospho-L-serine + ethanolamine. The enzyme catalyses 1-octadecanoyl-2-(9Z-octadecenoyl)-sn-glycero-3-phosphoethanolamine + L-serine = 1-octadecanoyl-2-(9Z-octadecenoyl)-sn-glycero-3-phospho-L-serine + ethanolamine. The catalysed reaction is 1-(1Z-octadecenyl)-2-(9Z-octadecenoyl)-sn-glycero-3-phosphoethanolamine + L-serine = 1-(1Z-octadecenyl)-2-(9Z-octadecenoyl)-sn-glycero-3-phospho-L-serine + ethanolamine. It catalyses the reaction 1-(1Z-octadecenyl)-2-(5Z,8Z,11Z,14Z- eicosatetraenoyl)-sn-glycero-3-phosphoethanolamine + L-serine = 1-(1Z-octadecenyl)-2-(5Z,8Z,11Z,14Z-eicosatetraenoyl)-sn-glycero-3-phospho-L-serine + ethanolamine. It participates in phospholipid metabolism; phosphatidylserine biosynthesis. Catalyzes a base-exchange reaction in which the polar head group of phosphatidylethanolamine (PE) or phosphatidylcholine (PC) is replaced by L-serine. Catalyzes the conversion of phosphatatidylethanolamine and does not act on phosphatidylcholine. Can utilize both phosphatidylethanolamine (PE) plasmalogen and diacyl PE as substrate and the latter is six times better utilized, indicating the importance of an ester linkage at the sn-1 position. Although it shows no sn-1 fatty acyl preference, exhibits significant preference towards docosahexaenoic acid (22:6n-3) compared with 18:1 or 20:4 at the sn-2 position. In Rattus norvegicus (Rat), this protein is Phosphatidylserine synthase 2 (Ptdss2).